A 304-amino-acid polypeptide reads, in one-letter code: Non-specific ribonucleoside hydrolase RihC (304 aa).

His233 is a catalytic residue.

Belongs to the IUNH family. RihC subfamily.

Functionally, hydrolyzes both purine and pyrimidine ribonucleosides with a broad-substrate specificity. The polypeptide is Non-specific ribonucleoside hydrolase RihC (Shigella dysenteriae serotype 1 (strain Sd197)).